The following is a 688-amino-acid chain: DNA polymerase III subunit tau/gamma (688 aa).

45 to 52 serves as a coordination point for ATP; the sequence is GTRGVGKT. Zn(2+)-binding residues include Cys-64, Cys-73, Cys-76, and Cys-79. Residues 452–506 form a disordered region; it reads QELDEEKSHKKMTALPVREMTEPKPKHIEKPTLPSNAAQAPQKNSTEENSSDDNV. A compositionally biased stretch (basic and acidic residues) spans 470–481; that stretch reads EMTEPKPKHIEK. Positions 484-499 are enriched in polar residues; sequence LPSNAAQAPQKNSTEE.

The protein belongs to the DnaX/STICHEL family. As to quaternary structure, DNA polymerase III contains a core (composed of alpha, epsilon and theta chains) that associates with a tau subunit. This core dimerizes to form the POLIII' complex. PolIII' associates with the gamma complex (composed of gamma, delta, delta', psi and chi chains) and with the beta chain to form the complete DNA polymerase III complex.

It carries out the reaction DNA(n) + a 2'-deoxyribonucleoside 5'-triphosphate = DNA(n+1) + diphosphate. Functionally, DNA polymerase III is a complex, multichain enzyme responsible for most of the replicative synthesis in bacteria. This DNA polymerase also exhibits 3' to 5' exonuclease activity. This Haemophilus influenzae (strain ATCC 51907 / DSM 11121 / KW20 / Rd) protein is DNA polymerase III subunit tau/gamma (dnaX).